Here is a 316-residue protein sequence, read N- to C-terminus: Olfactory receptor 10H28 (316 aa).

Over 1–26 (MPGQNYSTISEFILFGFSAFPHQMLP) the chain is Extracellular. Residue N5 is glycosylated (N-linked (GlcNAc...) asparagine). Residues 27–47 (ALFLLYLLMYLFTLLGNLVIM) traverse the membrane as a helical segment. Residues 48-57 (AAIWTEHRLH) are Cytoplasmic-facing. The helical transmembrane segment at 58 to 78 (TPMYLFLCALSISEILFTVVI) threads the bilayer. The Extracellular portion of the chain corresponds to 79 to 100 (TPRMLSDMLSTHRSITFIACAN). Cysteines 98 and 190 form a disulfide. A helical transmembrane segment spans residues 101–121 (QLFFSFTFGYTHSFLLVVMGY). The Cytoplasmic portion of the chain corresponds to 122 to 144 (DRYVAICRPLHYHALMSLQGCAR). Residues 145–165 (LVAWSWAGGSLIGMALTIIIF) form a helical membrane-spanning segment. The Extracellular segment spans residues 166–207 (HLTFCESNVIHHILCHVFSLLKLACGERTAFVTIAVILVCVT). Residues 208–228 (PLIGCLVFIILSYIFIVAAIL) traverse the membrane as a helical segment. Over 229 to 241 (RIPSTEGRHKTFS) the chain is Cytoplasmic. The helical transmembrane segment at 242–262 (TCASHLTVVIVHYGFASIIYL) threads the bilayer. Residues 263 to 273 (KSRGLYSQYTD) are Extracellular-facing. Residues 274 to 294 (TLMSTTYTVFTPFLSPIIFSL) form a helical membrane-spanning segment. Residues 295–316 (RNKELKNAIIKSFHRNVCQQSI) are Cytoplasmic-facing.

This sequence belongs to the G-protein coupled receptor 1 family.

The protein localises to the cell membrane. In terms of biological role, odorant receptor. The sequence is that of Olfactory receptor 10H28 from Mus musculus (Mouse).